The chain runs to 311 residues: Uridine phosphorylase 1 (311 aa).

Phosphate is bound by residues Gly61, Arg95, and 139 to 142; that span reads RIGT. Uridine is bound by residues 143–144 and 218–220; these read SG and QGR.

It belongs to the PNP/UDP phosphorylase family. In terms of assembly, homodimer. Post-translationally, the N-terminus is blocked.

The catalysed reaction is uridine + phosphate = alpha-D-ribose 1-phosphate + uracil. It carries out the reaction 2'-deoxyuridine + phosphate = 2-deoxy-alpha-D-ribose 1-phosphate + uracil. It functions in the pathway pyrimidine metabolism; UMP biosynthesis via salvage pathway; uracil from uridine (phosphorylase route): step 1/1. Its activity is regulated as follows. Strongly inhibited by 2,2'-anhydro-5-ethyluridine, a competitive inhibitor. In terms of biological role, catalyzes the reversible phosphorylytic cleavage of uridine to uracil and ribose-1-phosphate which can then be utilized as carbon and energy sources or in the rescue of pyrimidine bases for nucleotide synthesis. Shows broad substrate specificity and can also accept deoxyuridine and other analogous compounds. The polypeptide is Uridine phosphorylase 1 (Mus musculus (Mouse)).